A 221-amino-acid polypeptide reads, in one-letter code: Glycerol metabolism activator (221 aa).

In terms of domain architecture, Response regulatory spans 3 to 120 (KILIADDHPL…QMTDAIEQIL (118 aa)). 4-aspartylphosphate is present on Asp55. Positions 149 to 214 (APELLQALTR…QAILSAGDID (66 aa)) constitute an HTH luxR-type domain. Residues 173–192 (NKQIAYNLDIAETTVKAHVS) constitute a DNA-binding region (H-T-H motif).

Its function is as follows. Positive activator for glycerol metabolism. Regulates the expression of qedA in a positive manner and governs the expression of ADH I and ADH IIB. General regulator of quinoprotein ethanol oxidation and affects expression of ADH IIG activity but is not the sole regulator. This is Glycerol metabolism activator from Pseudomonas putida (Arthrobacter siderocapsulatus).